A 97-amino-acid chain; its full sequence is Plastocyanin A/B (97 aa).

The Plastocyanin-like domain maps to 1 to 97 (AEVKLGSDDG…AGMKGEVTVN (97 aa)). Cu cation contacts are provided by histidine 37, cysteine 82, histidine 85, and methionine 90.

The protein belongs to the plastocyanin family. It depends on Cu(2+) as a cofactor.

The protein resides in the plastid. The protein localises to the chloroplast thylakoid membrane. In terms of biological role, participates in electron transfer between P700 and the cytochrome b6-f complex in photosystem I. The chain is Plastocyanin A/B (PETE) from Petroselinum crispum (Parsley).